The primary structure comprises 179 residues: Large ribosomal subunit protein uL5 (179 aa).

This sequence belongs to the universal ribosomal protein uL5 family. As to quaternary structure, part of the 50S ribosomal subunit; part of the 5S rRNA/L5/L18/L25 subcomplex. Contacts the 5S rRNA and the P site tRNA. Forms a bridge to the 30S subunit in the 70S ribosome.

Functionally, this is one of the proteins that bind and probably mediate the attachment of the 5S RNA into the large ribosomal subunit, where it forms part of the central protuberance. In the 70S ribosome it contacts protein S13 of the 30S subunit (bridge B1b), connecting the 2 subunits; this bridge is implicated in subunit movement. Contacts the P site tRNA; the 5S rRNA and some of its associated proteins might help stabilize positioning of ribosome-bound tRNAs. This chain is Large ribosomal subunit protein uL5, found in Neisseria meningitidis serogroup C (strain 053442).